Here is a 390-residue protein sequence, read N- to C-terminus: MSIDTARSGSDDDVEIREIQAAAAPTRFARGWHCLGLLRDFQDGKPHSIEAFGTKLVVFADSKGQLNVLDAYCRHMGGDLSRGEVKGDSIACPFHDWRWNGKGKCTDIPYARRVPPIAKTRAWTTLERNGQLYVWNDPQGNPPPEDVTIPEIAGYGTDEWTDWSWKSLRIKGSHCREIVDNVVDMAHFFYIHYSFPRYFKNVFEGHTATQYMHSTGREDVISGTNYDDPNAELRSEATYFGPSYMIDWLESDANGQTIETILINCHYPVSNNEFVLQYGAIVKKLPGVSDEIAAGMAEQFAEGVQLGFEQDVEIWKNKAPIDNPLLSEEDGPVYQLRRWYQQFYVDVEDITEDMTKRFEFEIDTTRAVASWQKEVAENLAKQAEGSTATP.

One can recognise a Rieske domain in the interval 32–134 (WHCLGLLRDF…TLERNGQLYV (103 aa)). C73, H75, C92, and H95 together coordinate [2Fe-2S] cluster. Residues N181, H187, H192, and D311 each coordinate Fe cation.

As to quaternary structure, homotrimer. The two-component system 3-ketosteroid-9-alpha-monooxygenase is composed of an oxygenase component KshA and a reductase component KshB. Requires [2Fe-2S] cluster as cofactor. Fe cation serves as cofactor.

It carries out the reaction androsta-1,4-diene-3,17-dione + 2 reduced [2Fe-2S]-[ferredoxin] + O2 + 2 H(+) = 9alpha-hydroxyandrosta-1,4-diene-3,17-dione + 2 oxidized [2Fe-2S]-[ferredoxin] + H2O. It functions in the pathway steroid metabolism; cholesterol degradation. In terms of biological role, probably involved in the degradation of cholesterol. In vitro, catalyzes the introduction of a 9alpha-hydroxyl moiety into the ring B of 3-ketosteroid substrates such as 1,4-androstadiene-3,17-dione (ADD), 4-androstene-3,17-dione (AD), 4-androstene-17beta-ol-3-one (testosterone), 4-pregnene-3,20-dione (progesterone), 19-nor-4-androstene-3,17-dione, 1-(5alpha)-androstene-3,17-dione, 5alpha-androstane-3,17-dione, 5beta-androstane-3,17-dione, 5alpha-androstane-17beta-ol-3-one (stanolon), 11beta-hydrocortisone, 3-oxo-23,24-bisnorcholesta-4-en-22-oate (4-BNC), 23,24-bisnorcholesta-4-ene-22-oate, 3-oxo-23,24-bisnorcholesta-1,4-dien-22-oate (1,4-BNC) and 3-oxo-23,24-bisnorcholesta-1,4-dien-22-oyl-coenzyme A thioester (1,4-BNC-CoA). KshA5 has the broadest substrate range without a clear substrate preference and is active with Delta-4, Delta-1,4, 5alpha-H and 5beta-H steroids, as well as with steroids having bulky aliphatic side chains and an isopropionyl side chain at C17. This chain is 3-ketosteroid-9-alpha-monooxygenase, oxygenase component, found in Rhodococcus rhodochrous.